We begin with the raw amino-acid sequence, 141 residues long: Lutropin subunit beta (141 aa).

A signal peptide spans 1-20 (MEMLQGLLLLLLLSMGGAWA). 6 disulfides stabilise this stretch: Cys29/Cys77, Cys43/Cys92, Cys46/Cys130, Cys54/Cys108, Cys58/Cys110, and Cys113/Cys120. N-linked (GlcNAc...) asparagine glycosylation is found at Asn33 and Asn50.

The protein belongs to the glycoprotein hormones subunit beta family. Heterodimer of a common alpha chain and a unique beta chain which confers biological specificity to thyrotropin, lutropin, follitropin and gonadotropin.

The protein resides in the secreted. Its function is as follows. Promotes spermatogenesis and ovulation by stimulating the testes and ovaries to synthesize steroids. The protein is Lutropin subunit beta (LHB) of Gorilla gorilla gorilla (Western lowland gorilla).